The following is a 246-amino-acid chain: tRNA (guanine-N(1)-)-methyltransferase (246 aa).

S-adenosyl-L-methionine is bound by residues Gly-112 and 131-136 (IGDYVL).

Belongs to the RNA methyltransferase TrmD family. In terms of assembly, homodimer.

The protein localises to the cytoplasm. It catalyses the reaction guanosine(37) in tRNA + S-adenosyl-L-methionine = N(1)-methylguanosine(37) in tRNA + S-adenosyl-L-homocysteine + H(+). In terms of biological role, specifically methylates guanosine-37 in various tRNAs. This is tRNA (guanine-N(1)-)-methyltransferase from Thermosipho melanesiensis (strain DSM 12029 / CIP 104789 / BI429).